The primary structure comprises 173 residues: Shikimate kinase 1 (173 aa).

Position 14-19 (14-19 (GAGKST)) interacts with ATP. Position 18 (Ser18) interacts with Mg(2+). Substrate contacts are provided by Asp36, Arg60, and Gly82. Arg120 serves as a coordination point for ATP. Arg140 contributes to the substrate binding site. Gln157 contacts ATP.

It belongs to the shikimate kinase family. As to quaternary structure, monomer. The cofactor is Mg(2+).

The protein localises to the cytoplasm. The catalysed reaction is shikimate + ATP = 3-phosphoshikimate + ADP + H(+). The protein operates within metabolic intermediate biosynthesis; chorismate biosynthesis; chorismate from D-erythrose 4-phosphate and phosphoenolpyruvate: step 5/7. In terms of biological role, catalyzes the specific phosphorylation of the 3-hydroxyl group of shikimic acid using ATP as a cosubstrate. The sequence is that of Shikimate kinase 1 from Escherichia fergusonii (strain ATCC 35469 / DSM 13698 / CCUG 18766 / IAM 14443 / JCM 21226 / LMG 7866 / NBRC 102419 / NCTC 12128 / CDC 0568-73).